The primary structure comprises 427 residues: MSIFCLAAYFWLTMVGGVMADNPERYSANLSSHMEDFTPFPGTEINFLGTTHRPPNLALPSNGSMHGYCPQQTKITTAFKYINTVISCTIFIVGMVGNATLLRIIYQNKCMRNGPNALIASLALGDLIYVVIDLPINVFKLLAGRWPFDHNDFGVFLCKLFPFLQKSSVGITVLNLCALSVDRYRAVASWSRVQGIGIPLITAIEIVSIWILSFILAIPEAIGFVMVPFEYKGELHRTCMLNATSKFMEFYQDVKDWWLFGFYFCMPLVCTAIFYTLMTCEMLNRRNGSLRIALSEHLKQRREVAKTVFCLVVIFALCWFPLHLSRILKKTVYDEMDKNRCELLSFLLLMDYIGINLATMNSCINPIALYFVSKKFKNCFQSCLCCCCHQSKSLMTSVPMNGTSIQWKNQEQNNHNTERSSHKDSMN.

The N-terminal stretch at 1 to 20 (MSIFCLAAYFWLTMVGGVMA) is a signal peptide. The Extracellular portion of the chain corresponds to 21–80 (DNPERYSANLSSHMEDFTPFPGTEINFLGTTHRPPNLALPSNGSMHGYCPQQTKITTAFK). Residues Asn29 and Asn62 are each glycosylated (N-linked (GlcNAc...) asparagine). A helical transmembrane segment spans residues 81–102 (YINTVISCTIFIVGMVGNATLL). Topologically, residues 103 to 112 (RIIYQNKCMR) are cytoplasmic. A helical membrane pass occupies residues 113-132 (NGPNALIASLALGDLIYVVI). Over 133-159 (DLPINVFKLLAGRWPFDHNDFGVFLCK) the chain is Extracellular. The cysteines at positions 158 and 239 are disulfide-linked. The chain crosses the membrane as a helical span at residues 160–181 (LFPFLQKSSVGITVLNLCALSV). Over 182–205 (DRYRAVASWSRVQGIGIPLITAIE) the chain is Cytoplasmic. The chain crosses the membrane as a helical span at residues 206–229 (IVSIWILSFILAIPEAIGFVMVPF). Topologically, residues 230–256 (EYKGELHRTCMLNATSKFMEFYQDVKD) are extracellular. A glycan (N-linked (GlcNAc...) asparagine) is linked at Asn242. A helical membrane pass occupies residues 257 to 278 (WWLFGFYFCMPLVCTAIFYTLM). Residues 279–306 (TCEMLNRRNGSLRIALSEHLKQRREVAK) lie on the Cytoplasmic side of the membrane. The chain crosses the membrane as a helical span at residues 307–328 (TVFCLVVIFALCWFPLHLSRIL). The Extracellular portion of the chain corresponds to 329-347 (KKTVYDEMDKNRCELLSFL). The chain crosses the membrane as a helical span at residues 348 to 372 (LLMDYIGINLATMNSCINPIALYFV). Topologically, residues 373–427 (SKKFKNCFQSCLCCCCHQSKSLMTSVPMNGTSIQWKNQEQNNHNTERSSHKDSMN) are cytoplasmic. The segment at 408 to 427 (KNQEQNNHNTERSSHKDSMN) is disordered. Over residues 416-427 (NTERSSHKDSMN) the composition is skewed to basic and acidic residues. A Phosphoserine modification is found at Ser425.

This sequence belongs to the G-protein coupled receptor 1 family. Endothelin receptor subfamily. EDNRA sub-subfamily. In terms of assembly, interacts with HDAC7 and KAT5.

The protein localises to the cell membrane. In terms of biological role, receptor for endothelin-1. Mediates its action by association with G proteins that activate a phosphatidylinositol-calcium second messenger system. The rank order of binding affinities for ET-A is: ET1 &gt; ET2 &gt;&gt; ET3. The chain is Endothelin-1 receptor from Mus musculus (Mouse).